The sequence spans 410 residues: Cell division protein FtsZ (410 aa).

GTP contacts are provided by residues 22–26 (GGGGN), 109–111 (GTG), Glu-140, Arg-144, and Asp-188. Residues 318 to 410 (ESKKDRKPHR…STPPFFRRKR (93 aa)) form a disordered region. Over residues 330–344 (RQAVQPMQQTTQSVE) the composition is skewed to polar residues. Over residues 360 to 398 (WDIRREQNTRPKVDESSLEQVDKKEFDTFHREEPNHNDD) the composition is skewed to basic and acidic residues.

It belongs to the FtsZ family. As to quaternary structure, homodimer. Polymerizes to form a dynamic ring structure in a strictly GTP-dependent manner. Interacts directly with several other division proteins.

The protein localises to the cytoplasm. In terms of biological role, essential cell division protein that forms a contractile ring structure (Z ring) at the future cell division site. The regulation of the ring assembly controls the timing and the location of cell division. One of the functions of the FtsZ ring is to recruit other cell division proteins to the septum to produce a new cell wall between the dividing cells. Binds GTP and shows GTPase activity. This chain is Cell division protein FtsZ, found in Enterococcus faecalis (strain ATCC 700802 / V583).